Consider the following 2610-residue polypeptide: E3 ubiquitin-protein ligase HECTD1 (2610 aa).

Residues 246-269 (TVSGPSSACKPGRSTTGAPSTTAD) are disordered. The segment covering 258-269 (RSTTGAPSTTAD) has biased composition (polar residues). ANK repeat units lie at residues 395-424 (VGQTLLNWASAFGTQEMVEFLCERGADVNR), 426-455 (QRSSSLHYAACFGRPQVAKTLLRHGANPDL), 459-491 (DGKTPLDKARERGHSEVVAILQSPGDWMCPVNK), and 579-612 (ITATVLDQEDDDDGHLLALQIIRDLVDKGGDIFL). The tract at residues 489 to 513 (VNKGDDKKKKDTNKDEEECNEPKGD) is disordered. Positions 491–501 (KGDDKKKKDTN) are enriched in basic and acidic residues. Disordered regions lie at residues 627–657 (LAGPSSDDENEEESKPEKEDEPQEDAKELQQ) and 707–748 (SSGS…LSAP). Phosphoserine is present on residues Ser631 and Ser640. Over residues 639 to 657 (ESKPEKEDEPQEDAKELQQ) the composition is skewed to basic and acidic residues. Low complexity predominate over residues 707–717 (SSGSPEGGSDS). The segment covering 718–729 (SESRSEFLEKLQ) has biased composition (basic and acidic residues). The MIB/HERC2 domain maps to 1266–1338 (VRSQVLKYMV…KFDLKLAPGY (73 aa)). Disordered stretches follow at residues 1343 to 1406 (VASP…KTER) and 1433 to 1483 (ENVP…SMGI). Residues 1348-1365 (PVSSTVSGTTQSWSSLVK) show a composition bias toward polar residues. Composition is skewed to low complexity over residues 1373 to 1395 (SAAAGSSSRKGSSSSVCSVASSS) and 1441 to 1458 (GSSSSASTSTLTAETGSE). Residue Ser1384 is modified to Phosphoserine. The span at 1469–1479 (SVRTPGESSAI) shows a compositional bias: polar residues. Residue Ser1488 is modified to Phosphoserine. The disordered stretch occupies residues 1496–1515 (ELTNKEAASQRPLSSSASNR). Residue Ser1567 is modified to Phosphoserine. Disordered regions lie at residues 1592 to 1611 (GAQSFPNLTTPGTTSTVTMS) and 1674 to 1757 (ELDD…KGGR). Positions 1600–1611 (TTPGTTSTVTMS) are enriched in low complexity. Residues 1674–1703 (ELDDDEDLPEPDEEDDENEDDNQEDQEYEE) show a composition bias toward acidic residues. Thr1760 carries the phosphothreonine modification. The residue at position 1772 (Ser1772) is a Phosphoserine. The segment at 1777–1797 (AFDPRPGRTNVQQTTDLEIPP) is disordered. The tract at residues 2029-2103 (FTFPPDEFTS…AIVWLQNRRE (75 aa)) is K-box. An HECT domain is found at 2151–2610 (IHADRKSVLE…ATMEKGFHLN (460 aa)). The tract at residues 2297-2318 (HCTESQSEASTEEGHDSLSVGS) is disordered. Ser2318 bears the Phosphoserine mark. Cys2579 acts as the Glycyl thioester intermediate in catalysis.

The protein belongs to the UPL family. K-HECT subfamily. As to quaternary structure, interacts with IGSF1.

It carries out the reaction S-ubiquitinyl-[E2 ubiquitin-conjugating enzyme]-L-cysteine + [acceptor protein]-L-lysine = [E2 ubiquitin-conjugating enzyme]-L-cysteine + N(6)-ubiquitinyl-[acceptor protein]-L-lysine.. The protein operates within protein modification; protein ubiquitination. Functionally, E3 ubiquitin-protein ligase which accepts ubiquitin from an E2 ubiquitin-conjugating enzyme in the form of a thioester and then directly transfers the ubiquitin to targeted substrates. Mediates 'Lys-63'-linked polyubiquitination of HSP90AA1 which leads to its intracellular localization and reduced secretion. Negatively regulating HSP90AA1 secretion in cranial mesenchyme cells may impair their emigration and may be essential for the correct development of the cranial neural folds and neural tube closure. Catalyzes ubiquitination and degradation of ZNF622, an assembly factor for the ribosomal 60S subunit, in hematopoietic cells, thereby promoting hematopoietic stem cell renewal. This chain is E3 ubiquitin-protein ligase HECTD1, found in Homo sapiens (Human).